The sequence spans 399 residues: Tryptophan synthase beta chain (399 aa).

Lysine 92 is modified (N6-(pyridoxal phosphate)lysine).

Belongs to the TrpB family. Tetramer of two alpha and two beta chains. Pyridoxal 5'-phosphate serves as cofactor.

The catalysed reaction is (1S,2R)-1-C-(indol-3-yl)glycerol 3-phosphate + L-serine = D-glyceraldehyde 3-phosphate + L-tryptophan + H2O. Its pathway is amino-acid biosynthesis; L-tryptophan biosynthesis; L-tryptophan from chorismate: step 5/5. In terms of biological role, the beta subunit is responsible for the synthesis of L-tryptophan from indole and L-serine. The chain is Tryptophan synthase beta chain from Legionella pneumophila (strain Corby).